Reading from the N-terminus, the 95-residue chain is Scytovirin (95 aa).

An SD1 region spans residues 3-41; that stretch reads GPTYCWNEANNPGGPNRCSNNKQCDGARTCSSSGFCQGT. Cystine bridges form between Cys-7–Cys-55, Cys-20–Cys-32, Cys-26–Cys-38, Cys-68–Cys-80, and Cys-74–Cys-86. The interval 51 to 89 is SD2; it reads GPTYCWDEAKNPGGPNRCSNSKQCDGARTCSSSGFCQGT.

Functionally, has strong anti-HIV activity against T-tropic strains of HIV-1 and weaker activity against M-tropic strains of HIV-1. Inhibits HIV-1 fusion and infection of CD4 LTR beta-gal cells in vitro. Inhibits fusion of HIV infected CEM-SS cells with uninfected CEM-SS cells, and fusion of HIV-1 Env expressing HL2/3 cells with CD4 LTR beta-gal cells. Binds to HIV gp120, HIV gp160 and to a lesser extent HIV gp41. Binding to HIV gp120 is glycosylation dependent. Binds with high specificity to the tetrasaccharide Man-alpha-1,2-Man-alpha-1,6-Man-alpha-1,6-Man and also binds the higher-order oligosaccharides oligomannose 8 and oligomannose 9. Does not bind to monosaccharides, complex or hybrid N-linked oligosaccharides or chitin. In Scytonema varium, this protein is Scytovirin.